The primary structure comprises 303 residues: 1D-myo-inositol 2-acetamido-2-deoxy-alpha-D-glucopyranoside deacetylase (303 aa).

Zn(2+) contacts are provided by His-13, Asp-16, and His-147.

It belongs to the MshB deacetylase family. It depends on Zn(2+) as a cofactor.

The enzyme catalyses 1D-myo-inositol 2-acetamido-2-deoxy-alpha-D-glucopyranoside + H2O = 1D-myo-inositol 2-amino-2-deoxy-alpha-D-glucopyranoside + acetate. Catalyzes the deacetylation of 1D-myo-inositol 2-acetamido-2-deoxy-alpha-D-glucopyranoside (GlcNAc-Ins) in the mycothiol biosynthesis pathway. In Mycobacterium tuberculosis (strain ATCC 25177 / H37Ra), this protein is 1D-myo-inositol 2-acetamido-2-deoxy-alpha-D-glucopyranoside deacetylase.